We begin with the raw amino-acid sequence, 338 residues long: Ribosomal RNA small subunit methyltransferase H (338 aa).

Residues 46 to 48 (GGY), Asp-63, Phe-90, Asp-106, and Gln-113 each bind S-adenosyl-L-methionine.

The protein belongs to the methyltransferase superfamily. RsmH family.

Its subcellular location is the cytoplasm. It catalyses the reaction cytidine(1402) in 16S rRNA + S-adenosyl-L-methionine = N(4)-methylcytidine(1402) in 16S rRNA + S-adenosyl-L-homocysteine + H(+). Specifically methylates the N4 position of cytidine in position 1402 (C1402) of 16S rRNA. This is Ribosomal RNA small subunit methyltransferase H from Mesorhizobium japonicum (strain LMG 29417 / CECT 9101 / MAFF 303099) (Mesorhizobium loti (strain MAFF 303099)).